The following is an 89-amino-acid chain: Acylphosphatase (89 aa).

Residues 4-89 (SRRFLVSGTV…EQPPEGFRVL (86 aa)) form the Acylphosphatase-like domain. Residues R19 and N37 contribute to the active site.

The protein belongs to the acylphosphatase family.

The enzyme catalyses an acyl phosphate + H2O = a carboxylate + phosphate + H(+). This chain is Acylphosphatase (acyP), found in Alkalilimnicola ehrlichii (strain ATCC BAA-1101 / DSM 17681 / MLHE-1).